The chain runs to 245 residues: 1-(5-phosphoribosyl)-5-[(5-phosphoribosylamino)methylideneamino] imidazole-4-carboxamide isomerase (245 aa).

D8 acts as the Proton acceptor in catalysis. The Proton donor role is filled by D130.

This sequence belongs to the HisA/HisF family.

It localises to the cytoplasm. The catalysed reaction is 1-(5-phospho-beta-D-ribosyl)-5-[(5-phospho-beta-D-ribosylamino)methylideneamino]imidazole-4-carboxamide = 5-[(5-phospho-1-deoxy-D-ribulos-1-ylimino)methylamino]-1-(5-phospho-beta-D-ribosyl)imidazole-4-carboxamide. It participates in amino-acid biosynthesis; L-histidine biosynthesis; L-histidine from 5-phospho-alpha-D-ribose 1-diphosphate: step 4/9. This Pseudomonas entomophila (strain L48) protein is 1-(5-phosphoribosyl)-5-[(5-phosphoribosylamino)methylideneamino] imidazole-4-carboxamide isomerase.